The following is a 131-amino-acid chain: Small ribosomal subunit protein uS8 (131 aa).

It belongs to the universal ribosomal protein uS8 family. Part of the 30S ribosomal subunit. Contacts proteins S5 and S12.

Its function is as follows. One of the primary rRNA binding proteins, it binds directly to 16S rRNA central domain where it helps coordinate assembly of the platform of the 30S subunit. This is Small ribosomal subunit protein uS8 from Vesicomyosocius okutanii subsp. Calyptogena okutanii (strain HA).